The following is a 277-amino-acid chain: 3-methyl-2-oxobutanoate hydroxymethyltransferase (277 aa).

Positions 43 and 82 each coordinate Mg(2+). 3-methyl-2-oxobutanoate-binding positions include 43 to 44 (DS), aspartate 82, and lysine 112. Glutamate 114 contacts Mg(2+). Glutamate 181 serves as the catalytic Proton acceptor.

Belongs to the PanB family. As to quaternary structure, homodecamer; pentamer of dimers. Mg(2+) is required as a cofactor.

Its subcellular location is the cytoplasm. It catalyses the reaction 3-methyl-2-oxobutanoate + (6R)-5,10-methylene-5,6,7,8-tetrahydrofolate + H2O = 2-dehydropantoate + (6S)-5,6,7,8-tetrahydrofolate. It functions in the pathway cofactor biosynthesis; (R)-pantothenate biosynthesis; (R)-pantoate from 3-methyl-2-oxobutanoate: step 1/2. Catalyzes the reversible reaction in which hydroxymethyl group from 5,10-methylenetetrahydrofolate is transferred onto alpha-ketoisovalerate to form ketopantoate. This is 3-methyl-2-oxobutanoate hydroxymethyltransferase from Bacillus licheniformis (strain ATCC 14580 / DSM 13 / JCM 2505 / CCUG 7422 / NBRC 12200 / NCIMB 9375 / NCTC 10341 / NRRL NRS-1264 / Gibson 46).